A 126-amino-acid polypeptide reads, in one-letter code: Glycine cleavage system H protein (126 aa).

The region spanning 22–104 (TVTIGITEYA…YEKAWMVKVE (83 aa)) is the Lipoyl-binding domain. Lys-63 is modified (N6-lipoyllysine).

The protein belongs to the GcvH family. The glycine cleavage system is composed of four proteins: P, T, L and H. It depends on (R)-lipoate as a cofactor.

The glycine cleavage system catalyzes the degradation of glycine. The H protein shuttles the methylamine group of glycine from the P protein to the T protein. In terms of biological role, is also involved in protein lipoylation via its role as an octanoyl/lipoyl carrier protein intermediate. This is Glycine cleavage system H protein from Staphylococcus haemolyticus (strain JCSC1435).